The following is a 562-amino-acid chain: MNNHIRPLYIPYAGPALLSTPLLNKGSAFSTTERKYFNLEGLLPEAIESIEEQTGRAYKQYQSFENDMDKHIYLRNIQDTNETLFYRLVQNHISEMMPIIYTPTVGAACENFSNIYRRGRGLFISYENKNRIDDLLNNAANQNVKVIVVTDGERILGLGDQGIGGMGIPIGKLALYTACGGISPAHTLPIVLDVGTNNPQRLADPMYMGWRHPRVTGNEYKDFVEEFIQAVQRRWPQALVQFEDFAQKNAMPLLERYKNRICCFNDDIQGTAAVTVGSLLAACKAAGSSLAQQRVTFLGAGSAGCGIAEAIIAQMVSEGISDAQARSQVYMVDRWGLLQEGMPNLLDFQQRLVQKAENTKEWVSEEPNYSLFDVMHNAKPTVLIGVSGAPGLFSKEVIQEMHKHCERPIVFPLSNPTSRVEATPNDIIRWTDGQALVATGSPFDPVTHNGQTYPIAQCNNSFIFPGIGLGVLAIKATRVSDEMLRESSRALSECSPLAINGSGALLPPLEEIHTVSKKIAFAVAKKAIEQGYALEITDEALMQKIEQYFWKPVYRRYKRTAF.

The active-site Proton donor is Tyr101. Arg154 contributes to the NAD(+) binding site. Lys172 serves as the catalytic Proton acceptor. Residues Glu243, Asp244, and Asp267 each contribute to the a divalent metal cation site. NAD(+) contacts are provided by Asp267 and Asn415.

Belongs to the malic enzymes family. In terms of assembly, homotetramer. Requires Mg(2+) as cofactor. The cofactor is Mn(2+).

It catalyses the reaction (S)-malate + NAD(+) = pyruvate + CO2 + NADH. The enzyme catalyses oxaloacetate + H(+) = pyruvate + CO2. This Aliivibrio salmonicida (strain LFI1238) (Vibrio salmonicida (strain LFI1238)) protein is NAD-dependent malic enzyme.